We begin with the raw amino-acid sequence, 136 residues long: Small ribosomal subunit protein uS9 (136 aa).

It belongs to the universal ribosomal protein uS9 family.

The sequence is that of Small ribosomal subunit protein uS9 from Borreliella afzelii (strain PKo) (Borrelia afzelii).